A 227-amino-acid polypeptide reads, in one-letter code: Esterase Rv3036c (227 aa).

The helical transmembrane segment at 3 to 23 (YLIATAVLVAVVLVGWPAAGA) threads the bilayer.

The protein belongs to the RsiV family.

It is found in the cell membrane. Its subcellular location is the secreted. The protein resides in the cell wall. The catalysed reaction is a fatty acid ester + H2O = an aliphatic alcohol + a fatty acid + H(+). It catalyses the reaction an acetyl ester + H2O = an aliphatic alcohol + acetate + H(+). It carries out the reaction a butanoate ester + H2O = an aliphatic alcohol + butanoate + H(+). The enzyme catalyses a hexanoate ester + H2O = an aliphatic alcohol + hexanoate + H(+). The catalysed reaction is a dodecanoate ester + H2O = an aliphatic alcohol + dodecanoate + H(+). It catalyses the reaction a tetradecanoate ester + H2O = an aliphatic alcohol + tetradecanoate + H(+). It carries out the reaction an octanoate ester + H2O = an aliphatic alcohol + octanoate + H(+). Functionally, hydrolyzes ester substrates carbon chain lengths ranging from C2 to C14. In vitro, acetate (C2), butyrate (C4) and caprylate (C6) are hydrolyzed with high efficiency. Has lower activity against laurate (C12), myristate (C14) and caproate (C8), and weak activity against palmitate (C16). The polypeptide is Esterase Rv3036c (Mycobacterium tuberculosis (strain ATCC 25618 / H37Rv)).